The primary structure comprises 443 residues: Xaa-Pro dipeptidase (443 aa).

Residues aspartate 246, aspartate 257, histidine 339, glutamate 384, and glutamate 423 each coordinate Mn(2+).

This sequence belongs to the peptidase M24B family. Bacterial-type prolidase subfamily. Mn(2+) is required as a cofactor.

The enzyme catalyses Xaa-L-Pro dipeptide + H2O = an L-alpha-amino acid + L-proline. Its function is as follows. Splits dipeptides with a prolyl residue in the C-terminal position. In Pectobacterium atrosepticum (strain SCRI 1043 / ATCC BAA-672) (Erwinia carotovora subsp. atroseptica), this protein is Xaa-Pro dipeptidase.